We begin with the raw amino-acid sequence, 168 residues long: 2-C-methyl-D-erythritol 2,4-cyclodiphosphate synthase (168 aa).

A divalent metal cation contacts are provided by aspartate 13 and histidine 15. 4-CDP-2-C-methyl-D-erythritol 2-phosphate contacts are provided by residues 13–15 (DVH) and 39–40 (HS). Histidine 47 contributes to the a divalent metal cation binding site. Residues 61–63 (DIG), 66–70 (FPDTD), phenylalanine 144, and lysine 147 contribute to the 4-CDP-2-C-methyl-D-erythritol 2-phosphate site.

This sequence belongs to the IspF family. As to quaternary structure, homotrimer. A divalent metal cation serves as cofactor.

The enzyme catalyses 4-CDP-2-C-methyl-D-erythritol 2-phosphate = 2-C-methyl-D-erythritol 2,4-cyclic diphosphate + CMP. It functions in the pathway isoprenoid biosynthesis; isopentenyl diphosphate biosynthesis via DXP pathway; isopentenyl diphosphate from 1-deoxy-D-xylulose 5-phosphate: step 4/6. Involved in the biosynthesis of isopentenyl diphosphate (IPP) and dimethylallyl diphosphate (DMAPP), two major building blocks of isoprenoid compounds. Catalyzes the conversion of 4-diphosphocytidyl-2-C-methyl-D-erythritol 2-phosphate (CDP-ME2P) to 2-C-methyl-D-erythritol 2,4-cyclodiphosphate (ME-CPP) with a corresponding release of cytidine 5-monophosphate (CMP). The polypeptide is 2-C-methyl-D-erythritol 2,4-cyclodiphosphate synthase (Ralstonia pickettii (strain 12J)).